The sequence spans 146 residues: uncharacterized protein (146 aa).

An HTH marR-type domain is found at 1–137 (MLSQEFFNSF…TINVMNQIHE (137 aa)).

This is an uncharacterized protein from Staphylococcus aureus (strain MRSA252).